We begin with the raw amino-acid sequence, 338 residues long: MAKVMNLTPVHASSIPDSFLLPADRLHPATTDVSLPIIDMSRGRDEVRQAILDSGKEYGFIQVVNHGISEPMLHEMYAVCHEFFDMPAEDKAEFFSEDRSERNKLFCGSAFETLGEKYWIDVLELLYPLPSGDTKDWPHKPQMLREVVGNYTSLARGVAMEILRLLCEGLGLRPDFFVGDISGGRVVVDINYYPPSPNPSRTLGLPPHCDRDLMTVLLPGAVPGLEIAYKGGWIKVQPVPNSLVINFGLQLEVVTNGYLKAVEHRAATNFAEPRLSVASFIVPADDCVVGPAEEFVSEDNPPRYRTLTVGEFKRKHNVVNLDSSINQIININNNQKGI.

Residues 180–283 form the Fe2OG dioxygenase domain; it reads DISGGRVVVD…RLSVASFIVP (104 aa). Positions 208, 210, and 264 each coordinate Fe cation. 2-oxoglutarate is bound at residue Arg274.

It belongs to the iron/ascorbate-dependent oxidoreductase family. Fe(2+) serves as cofactor. The cofactor is L-ascorbate. As to expression, expressed in roots, but not in leaves.

It carries out the reaction mugineate + 2-oxoglutarate + O2 = 3-epihydroxymugineate + succinate + CO2 + H(+). The enzyme catalyses 2'-deoxymugineate + 2-oxoglutarate + O2 = 3-epihydroxy-2'-deoxymugineate + succinate + CO2 + H(+). In terms of biological role, involved in the biosynthesis of mugineic acid family of phytosiderophores. Hydroxylates the C-3 positions of mugineic acid (MA) and 2'-deoxymugineic acid (DMA). May be involved in boron tolerance. The sequence is that of Mugineic-acid 3-dioxygenase (IDS2) from Hordeum vulgare (Barley).